We begin with the raw amino-acid sequence, 61 residues long: Small ribosomal subunit protein uS14 (61 aa).

The Zn(2+) site is built by Cys-24, Cys-27, Cys-40, and Cys-43.

This sequence belongs to the universal ribosomal protein uS14 family. Zinc-binding uS14 subfamily. In terms of assembly, part of the 30S ribosomal subunit. Contacts proteins S3 and S10. The cofactor is Zn(2+).

Functionally, binds 16S rRNA, required for the assembly of 30S particles and may also be responsible for determining the conformation of the 16S rRNA at the A site. The sequence is that of Small ribosomal subunit protein uS14 from Desulfotalea psychrophila (strain LSv54 / DSM 12343).